A 1174-amino-acid polypeptide reads, in one-letter code: Fanconi anemia group J protein homolog (1174 aa).

The region spanning 11–445 is the Helicase ATP-binding domain; that stretch reads GGVKIHFPCR…KSHEPLRDVC (435 aa). Over residues 101–126 the composition is skewed to polar residues; the sequence is NLDTSPHFNSPSKPSSGRNGVSTPCQ. Disordered stretches follow at residues 101-160 and 187-208; these read NLDT…EKKR and LASE…DRKD. A compositionally biased stretch (low complexity) spans 134–143; that stretch reads LAAKLSAKKQ. The Nuclear localization signal motif lies at 158 to 175; that stretch reads KKRIRPLETTQQIRKRHC. 185–192 contacts ATP; the sequence is ARLASEKR. Residues C286, C301, C313, and C353 each contribute to the [4Fe-4S] cluster site. A DEAH box motif is present at residues 393–396; that stretch reads VILD. An interaction with BRCA1 region spans residues 888 to 1063; that stretch reads SRRHQKVTNR…SNETADTSLG (176 aa). Composition is skewed to polar residues over residues 923-935 and 990-1001; these read TSVS…SPEN and SRSSSPTFGKQT. Disordered regions lie at residues 923-1001 and 1102-1155; these read TSVS…GKQT and LSPG…SSHS. Phosphoserine is present on residues S929, S932, and S994. Positions 1138 to 1147 are enriched in acidic residues; the sequence is DTNEENGELV. K1174 carries the post-translational modification N6-acetyllysine.

It belongs to the DEAD box helicase family. DEAH subfamily. In terms of assembly, binds directly to the BRCT domains of BRCA1. Interacts with the CIA complex components CIAO1, CIAO2B and MMS19. [4Fe-4S] cluster serves as cofactor. Post-translationally, phosphorylated. Phosphorylation is necessary for interaction with BRCA1, and is cell-cycle regulated.

The protein localises to the nucleus. It localises to the cytoplasm. It catalyses the reaction Couples ATP hydrolysis with the unwinding of duplex DNA at the replication fork by translocating in the 5'-3' direction. This creates two antiparallel DNA single strands (ssDNA). The leading ssDNA polymer is the template for DNA polymerase III holoenzyme which synthesizes a continuous strand.. The enzyme catalyses ATP + H2O = ADP + phosphate + H(+). Its function is as follows. DNA-dependent helicase and 5' to 3' DNA helicase required for the maintenance of chromosomal stability. Acts late in the Fanconi anemia pathway, after FANCD2 ubiquitination. Involved in the repair of DNA double-strand breaks by homologous recombination in a manner that depends on its association with BRCA1. Involved in the repair of abasic sites at replication forks by promoting the degradation of DNA-protein cross-links: acts by catalyzing unfolding of HMCES DNA-protein cross-link via its helicase activity, exposing the underlying DNA and enabling cleavage of the DNA-protein adduct by the SPRTN metalloprotease. Can unwind RNA:DNA hybrids and G-quadruplex DNA. This chain is Fanconi anemia group J protein homolog, found in Mus musculus (Mouse).